A 325-amino-acid polypeptide reads, in one-letter code: ATP-dependent (S)-NAD(P)H-hydrate dehydratase (325 aa).

The YjeF C-terminal domain occupies 9–315 (LLKKVYNMVP…EHVHTAFLNV (307 aa)). (6S)-NADPHX-binding positions include Gly119 and 172–178 (NVVEFGR). Residues 211–215 (KGAKD) and 230–239 (GGLKRSGGQG) each bind ATP. Asp240 contributes to the (6S)-NADPHX binding site.

The protein belongs to the NnrD/CARKD family. It depends on Mg(2+) as a cofactor.

It localises to the cytoplasm. It carries out the reaction (6S)-NADHX + ATP = ADP + phosphate + NADH + H(+). The enzyme catalyses (6S)-NADPHX + ATP = ADP + phosphate + NADPH + H(+). Catalyzes the dehydration of the S-form of NAD(P)HX at the expense of ATP, which is converted to ADP. Together with NAD(P)HX epimerase, which catalyzes the epimerization of the S- and R-forms, the enzyme allows the repair of both epimers of NAD(P)HX, a damaged form of NAD(P)H that is a result of enzymatic or heat-dependent hydration. This is ATP-dependent (S)-NAD(P)H-hydrate dehydratase from Phaeosphaeria nodorum (strain SN15 / ATCC MYA-4574 / FGSC 10173) (Glume blotch fungus).